A 280-amino-acid polypeptide reads, in one-letter code: Large ribosomal subunit protein uL2 (280 aa).

The disordered stretch occupies residues 223–280 (VVMNPVDHPHGGGEGRTSGGRHPVTPWGKPTKGARTRNKNKASSKLIIRSRHAKKKGR). Basic residues predominate over residues 254-280 (KGARTRNKNKASSKLIIRSRHAKKKGR).

This sequence belongs to the universal ribosomal protein uL2 family. As to quaternary structure, part of the 50S ribosomal subunit. Forms a bridge to the 30S subunit in the 70S ribosome.

One of the primary rRNA binding proteins. Required for association of the 30S and 50S subunits to form the 70S ribosome, for tRNA binding and peptide bond formation. It has been suggested to have peptidyltransferase activity; this is somewhat controversial. Makes several contacts with the 16S rRNA in the 70S ribosome. The protein is Large ribosomal subunit protein uL2 of Dinoroseobacter shibae (strain DSM 16493 / NCIMB 14021 / DFL 12).